The following is a 1320-amino-acid chain: Collagen alpha-1(XX) chain (1320 aa).

An N-terminal signal peptide occupies residues 1-25 (MSLQGSYQHFCLWMFLGTTLALGQG). The Fibronectin type-III 1 domain maps to 27 to 118 (VSSRLRLAVL…EFVIEDLKSQ (92 aa)). A VWFA domain is found at 177–352 (DIIFLVDGSW…DTLAPLLSRL (176 aa)). Fibronectin type-III domains lie at 377–466 (TPTR…APLP), 467–556 (PPGP…SALG), 557–644 (PPRH…TQKA), 646–735 (SPGQ…TPSA), and 740–831 (PPSS…ACPA). The N-linked (GlcNAc...) asparagine glycan is linked to N433. N569 and N604 each carry an N-linked (GlcNAc...) asparagine glycan. Residues 728–752 (SLRYTPSAASRSPPSSLALSSETPN) are disordered. Low complexity predominate over residues 733–748 (PSAASRSPPSSLALSS). A glycan (N-linked (GlcNAc...) asparagine) is linked at N771. A Laminin G-like domain is found at 840–1035 (GFDLMVAFGL…LQMLQIVCSD (196 aa)). Disordered stretches follow at residues 1064–1220 (YSSE…EKGE) and 1291–1320 (LRPE…ESLE). The segment covering 1069–1080 (PGPPGPQGPPGL) has biased composition (pro residues). Collagen-like domains lie at 1069-1122 (PGPP…TQGR), 1125-1174 (QGPM…GPAG), and 1165-1221 (GMRG…KGEP). A compositionally biased stretch (low complexity) spans 1081–1093 (PGRNGPPGQQGHP). Positions 1106 to 1115 (GPEGPGGQQG) are enriched in gly residues. The span at 1140-1152 (QGLSGLQGLSGQQ) shows a compositional bias: low complexity. Residues 1302 to 1320 (ISHTSNPRLQEVQTPESLE) show a composition bias toward polar residues.

It is found in the secreted. It localises to the extracellular space. Its function is as follows. Probable collagen protein. This Mus musculus (Mouse) protein is Collagen alpha-1(XX) chain (Col20a1).